Here is a 411-residue protein sequence, read N- to C-terminus: Bestrophin homolog 26 (411 aa).

4 consecutive transmembrane segments (helical) span residues 30–50 (FTAI…FMVI), 73–93 (SHQE…SSVV), 235–255 (IPIP…YFAV), and 272–292 (TWIT…MGWM).

It belongs to the anion channel-forming bestrophin (TC 1.A.46) family. Calcium-sensitive chloride channel subfamily. As to quaternary structure, forms oligomers.

It localises to the cell membrane. Functionally, forms chloride channels. The protein is Bestrophin homolog 26 (best-26) of Caenorhabditis elegans.